A 333-amino-acid chain; its full sequence is NADH-quinone oxidoreductase subunit H (333 aa).

The next 8 membrane-spanning stretches (helical) occupy residues leucine 15–tyrosine 35, phenylalanine 88–phenylalanine 108, isoleucine 117–alanine 137, isoleucine 159–leucine 179, valine 191–glutamate 211, leucine 250–phenylalanine 270, phenylalanine 273–tryptophan 293, and valine 313–phenylalanine 333.

It belongs to the complex I subunit 1 family. In terms of assembly, NDH-1 is composed of 14 different subunits. Subunits NuoA, H, J, K, L, M, N constitute the membrane sector of the complex.

Its subcellular location is the cell membrane. The catalysed reaction is a quinone + NADH + 5 H(+)(in) = a quinol + NAD(+) + 4 H(+)(out). NDH-1 shuttles electrons from NADH, via FMN and iron-sulfur (Fe-S) centers, to quinones in the respiratory chain. The immediate electron acceptor for the enzyme in this species is believed to be ubiquinone. Couples the redox reaction to proton translocation (for every two electrons transferred, four hydrogen ions are translocated across the cytoplasmic membrane), and thus conserves the redox energy in a proton gradient. This subunit may bind ubiquinone. The chain is NADH-quinone oxidoreductase subunit H from Geobacillus sp. (strain WCH70).